Reading from the N-terminus, the 96-residue chain is Putative septation protein SpoVG (96 aa).

Belongs to the SpoVG family.

Could be involved in septation. This is Putative septation protein SpoVG from Phytoplasma australiense.